The chain runs to 75 residues: Conotoxin Vn5.5 (75 aa).

The N-terminal stretch at 1–19 is a signal peptide; sequence MLCLPVFIILLLLASPAAP. A propeptide spanning residues 20–59 is cleaved from the precursor; sequence NPLEKRIQSDLIRAALEDADMKTDEREIVNIIDSISDVAK. Q60 carries the post-translational modification Pyrrolidone carboxylic acid.

Belongs to the conotoxin T superfamily. Contains 2 disulfide bonds that can be either 'C1-C3, C2-C4' or 'C1-C4, C2-C3', since these disulfide connectivities have been observed for conotoxins with cysteine framework V (for examples, see AC P0DQQ7 and AC P81755). Expressed by the venom duct.

It is found in the secreted. The protein is Conotoxin Vn5.5 of Conus ventricosus (Mediterranean cone).